We begin with the raw amino-acid sequence, 409 residues long: Pleckstrin homology domain-containing family O member 1 (409 aa).

Residues 1–24 are disordered; it reads MMKKNNSAKRGPQDGNQQPAPPEK. The 112-residue stretch at 21–132 folds into the PH domain; that stretch reads PPEKVGWVRK…WINALNSAIT (112 aa). The interaction with capping proteins (CPs) stretch occupies residues 133 to 193; it reads RAKNRILDEV…MLTLDLIQEE (61 aa). The interaction with ATM, CKIP, IFP35 and NMI stretch occupies residues 136–308; it reads NRILDEVTVE…LPNPGQLSRI (173 aa). A disordered region spans residues 218–267; sequence LAGSRRRADSDRIQPSADRASSLSRPWEKTDKGATYTPQAPKKLTPTEKG. Phosphoserine is present on residues Ser-227 and Ser-271. The tract at residues 308–409 is negative regulator of AP-1 activity; that stretch reads IQDLVARKLE…PHSQYRKSLM (102 aa). 2 disordered regions span residues 325-350 and 390-409; these read EVQG…ESEQ and TPDS…KSLM. The span at 331 to 340 shows a compositional bias: basic and acidic residues; sequence DGKRKAKDPP. Ser-342 carries the phosphoserine modification. Residues 390–402 are compositionally biased toward polar residues; it reads TPDSHLRQTTPHS.

As to quaternary structure, heterodimer or homodimer. Interacts with CK2 and actin capping subunits (capping protein CP-alpha and CP-beta). CKIP1 and CK2 together inhibit the activity of actin capping protein at the barbed ends of actin filaments. Interacts with ATM, IFP35, JUN, JUND, NMI and PI3K. Interacts with AKT1, AKT2 and AKT3 (each isozyme of PKB), PtdIns(3,5)P2, PtdIns(4,5)P2 and PtdIns(3,4,5)P2. Post-translationally, C-terminal fragments could be released during apoptosis via caspase-3-dependent cleavage. As to expression, abundantly expressed in skeletal muscle and heart, moderately in kidney, liver, brain and placenta and sparingly in the pancreas and lung. Easily detectable in cell lines such as MOLT-4, HEK293 and Jurkat.

It localises to the cell membrane. The protein resides in the nucleus. The protein localises to the cytoplasm. Its function is as follows. Plays a role in the regulation of the actin cytoskeleton through its interactions with actin capping protein (CP). May function to target CK2 to the plasma membrane thereby serving as an adapter to facilitate the phosphorylation of CP by protein kinase 2 (CK2). Appears to target ATM to the plasma membrane. Appears to also inhibit tumor cell growth by inhibiting AKT-mediated cell-survival. Also implicated in PI3K-regulated muscle differentiation, the regulation of AP-1 activity (plasma membrane bound AP-1 regulator that translocates to the nucleus) and the promotion of apoptosis induced by tumor necrosis factor TNF. When bound to PKB, it inhibits it probably by decreasing PKB level of phosphorylation. The polypeptide is Pleckstrin homology domain-containing family O member 1 (PLEKHO1) (Homo sapiens (Human)).